The following is a 664-amino-acid chain: MTEKTNGVKSSPANNHNHHAPPAIKANGKDDHRTSSRPHSAADDDTSSELQRLADVDAPQQGRSGFRRIVRLVGIIREWANKNFREEEPRPDSFLERFRGPELQTVTTQEGDGKGDKDGEDKGTKKKFELFVLDPAGDWYYCWLFVIAMPVLYNWCLLVARACFSDLQKGYYLVWLVLDYVSDVVYIADLFIRLRTGFLEQGLLVKDTKKLRDNYIHTLQFKLDVASIIPTDLIYFAVDIHSPEVRFNRLLHFARMFEFFDRTETRTNYPNIFRISNLVLYILVIIHWNACIYYAISKSIGFGVDTWVYPNITDPEYGYLAREYIYCLYWSTLTLTTIGETPPPVKDEEYLFVIFDFLIGVLIFATIVGNVGSMISNMNATRAEFQAKIDAVKHYMQFRKVSKGMEAKVIRWFDYLWTNKKTVDEREILKNLPAKLRAEIAINVHLSTLKKVRIFHDCEAGLLVELVLKLRPQVFSPGDYICRKGDIGKEMYIIKEGKLAVVADDGVTQYALLSAGSCFGEISILNIKGSKMGNRRTANIRSLGYSDLFCLSKDDLMEAVTEYPDAKKVLEERGREILMKEGLLDENEVATSMEVDVQEKLGQLETNMETLYTRFGRLLAEYTGAQQKLKQRITVLETKMKQNNEDDYLSDGMNSPELAAADEP.

Polar residues predominate over residues 1-11; the sequence is MTEKTNGVKSS. Residues 1–49 are disordered; that stretch reads MTEKTNGVKSSPANNHNHHAPPAIKANGKDDHRTSSRPHSAADDDTSSE. Residues 1 to 144 lie on the Cytoplasmic side of the membrane; the sequence is MTEKTNGVKS…PAGDWYYCWL (144 aa). Residues 12–23 show a composition bias toward low complexity; sequence PANNHNHHAPPA. The helical transmembrane segment at 145-166 threads the bilayer; sequence FVIAMPVLYNWCLLVARACFSD. Topologically, residues 167–176 are extracellular; that stretch reads LQKGYYLVWL. A helical membrane pass occupies residues 177-197; the sequence is VLDYVSDVVYIADLFIRLRTG. Residues 198–222 are Cytoplasmic-facing; it reads FLEQGLLVKDTKKLRDNYIHTLQFK. A helical transmembrane segment spans residues 223–241; sequence LDVASIIPTDLIYFAVDIH. Over 242–246 the chain is Extracellular; it reads SPEVR. Residues 247-265 form a helical membrane-spanning segment; sequence FNRLLHFARMFEFFDRTET. Topologically, residues 266 to 272 are cytoplasmic; the sequence is RTNYPNI. Residues 270-378 are ion conduction pathway; sequence PNIFRISNLV…GNVGSMISNM (109 aa). Residues 273-296 form a helical membrane-spanning segment; the sequence is FRISNLVLYILVIIHWNACIYYAI. Over 297-319 the chain is Extracellular; the sequence is SKSIGFGVDTWVYPNITDPEYGY. 2 helical membrane passes run 320-354 and 355-379; these read LARE…LFVI and FDFL…SNMN. The tract at residues 337-340 is selectivity filter; that stretch reads TIGE. A C-linker region spans residues 380 to 456; it reads ATRAEFQAKI…STLKKVRIFH (77 aa). The Cytoplasmic segment spans residues 380-664; sequence ATRAEFQAKI…SPELAAADEP (285 aa). The cyclic nucleotide-binding domain stretch occupies residues 460-580; that stretch reads AGLLVELVLK…EERGREILMK (121 aa). Gly520, Ser523, Arg536, and Thr537 together coordinate 3',5'-cyclic GMP. Residues Arg536 and Thr537 each contribute to the 3',5'-cyclic AMP site. Residues 597–651 are a coiled coil; that stretch reads VQEKLGQLETNMETLYTRFGRLLAEYTGAQQKLKQRITVLETKMKQNNEDDYLSD. The tract at residues 641-664 is disordered; sequence KQNNEDDYLSDGMNSPELAAADEP.

It belongs to the cyclic nucleotide-gated cation channel (TC 1.A.1.5) family. CNGA2 subfamily. The olfactory cyclic nucleotide-gated channel is an heterotetramer composed of CNGA2, CNGA4 and CNGB1b subunits with 2:1:1 stoichiometry.

It is found in the cell projection. The protein localises to the cilium membrane. The catalysed reaction is Ca(2+)(in) = Ca(2+)(out). The enzyme catalyses Na(+)(in) = Na(+)(out). It catalyses the reaction K(+)(in) = K(+)(out). It carries out the reaction NH4(+)(in) = NH4(+)(out). The catalysed reaction is Rb(+)(in) = Rb(+)(out). The enzyme catalyses Li(+)(in) = Li(+)(out). It catalyses the reaction Cs(+)(in) = Cs(+)(out). In terms of biological role, pore-forming subunit of the olfactory cyclic nucleotide-gated channel. Operates in the cilia of olfactory sensory neurons where chemical stimulation of the odorant is converted to an electrical signal. Mediates odorant-induced cAMP-dependent Ca(2+) influx triggering neuron depolarization. The rise of intracellular Ca(2+) levels potentiates the olfactory response by activating Ca(2+)-dependent Cl(-) channels, but it also serves as a negative feedback signal to desensitize the channel for rapid adaptation to odorants. Conducts cAMP- and cGMP-gated ion currents, with permeability for monovalent and divalent cations. This is Cyclic nucleotide-gated channel alpha-2 from Homo sapiens (Human).